Reading from the N-terminus, the 140-residue chain is MALERTFSMIKPDATRRNLTGAITKMLEDAGLRVIASKRVWMSKREAEKFYAVHKERPFFSELVEFMSSGPTVVQVLEGENAIAKNREVMGATNPSDAEEGTIRKVHALSIGENSVHGSDSAETAKTEITFWFSEIEIVG.

Residues Lys-11, Phe-59, Arg-87, Thr-93, Arg-104, and Asn-114 each coordinate ATP. His-117 acts as the Pros-phosphohistidine intermediate in catalysis.

The protein belongs to the NDK family. As to quaternary structure, homotetramer. Requires Mg(2+) as cofactor.

It localises to the cytoplasm. It carries out the reaction a 2'-deoxyribonucleoside 5'-diphosphate + ATP = a 2'-deoxyribonucleoside 5'-triphosphate + ADP. The catalysed reaction is a ribonucleoside 5'-diphosphate + ATP = a ribonucleoside 5'-triphosphate + ADP. Its function is as follows. Major role in the synthesis of nucleoside triphosphates other than ATP. The ATP gamma phosphate is transferred to the NDP beta phosphate via a ping-pong mechanism, using a phosphorylated active-site intermediate. This Bartonella tribocorum (strain CIP 105476 / IBS 506) protein is Nucleoside diphosphate kinase.